A 214-amino-acid chain; its full sequence is Reticulon-3-B (214 aa).

Residues 1-22 (MAETSGPQSSHISSSSAGDKGS) are disordered. In terms of domain architecture, Reticulon spans 26 to 214 (VRDLLYWRDV…LPGALKKKSE (189 aa)). 2 helical membrane-spanning segments follow: residues 46-66 (MVLL…YLVL) and 150-170 (TYIG…LLAF).

As to quaternary structure, homodimer.

Its subcellular location is the endoplasmic reticulum membrane. The protein resides in the golgi apparatus membrane. May be involved in membrane trafficking in the early secretory pathway. The sequence is that of Reticulon-3-B (rtn3-b) from Xenopus laevis (African clawed frog).